Reading from the N-terminus, the 446-residue chain is Fatty acid desaturase 2 (446 aa).

Topologically, residues 1-132 are cytoplasmic; that stretch reads MGMGGQSGEG…EDMRLFKSNP (132 aa). The Cytochrome b5 heme-binding domain occupies 20–97; sequence EAQYSWEEIQ…LKPLYIGELA (78 aa). Residues 133–153 form a helical membrane-spanning segment; that stretch reads AFFIFYLFHILLIEFLAWCTL. His154 is a topological domain (lumenal). A helical transmembrane segment spans residues 155–175; sequence YLGTGWIPAIITVLLLTISQA. Topologically, residues 176–265 are cytoplasmic; sequence QAGWLQHDFG…IKYLPYNHQH (90 aa). Positions 182 to 186 match the Histidine box-1 motif; that stretch reads HDFGH. The Histidine box-2 signature appears at 219-223; sequence HFQHH. The helical transmembrane segment at 266–286 threads the bilayer; that stretch reads LYFFLIGPPLLIPVYFTVQII. Residues 287-307 are Lumenal-facing; sequence KTMIARKDWVDLAWSVSYYVR. A helical transmembrane segment spans residues 308-328; it reads FFFTFVPFFGVLGSLALLNAV. The Cytoplasmic segment spans residues 329–446; it reads RFFESHWFVW…QLWLDAYLHK (118 aa). Positions 384-388 match the Histidine box-3 motif; the sequence is QIEHH.

This sequence belongs to the fatty acid desaturase type 1 family.

It is found in the endoplasmic reticulum membrane. It functions in the pathway lipid metabolism; polyunsaturated fatty acid biosynthesis. Its function is as follows. Component of a lipid metabolic pathway that catalyzes biosynthesis of highly unsaturated fatty acids (HUFA) from precursor essential polyunsaturated fatty acids (PUFA) linoleic acid (LA) (18:2n-6) and alpha-linolenic acid (ALA) (18:3n-3). Catalyzes the first and rate limiting step in this pathway which is the desaturation of LA (18:2n-6) and ALA (18:3n-3) into gamma-linoleic acid (GLA) (18:3n-6) and stearidonic acid (18:4n-3) respectively and other desaturation steps. Highly unsaturated fatty acids (HUFA) play pivotal roles in many biological functions. In Xenopus laevis (African clawed frog), this protein is Fatty acid desaturase 2 (fads2).